A 122-amino-acid chain; its full sequence is Small ribosomal subunit protein bS6 (122 aa).

Residues 96 to 122 are disordered; sequence ETAPSPMMKAVQKEDAAKSHRTEAPAA. Residues 106-122 show a composition bias toward basic and acidic residues; that stretch reads VQKEDAAKSHRTEAPAA.

This sequence belongs to the bacterial ribosomal protein bS6 family.

In terms of biological role, binds together with bS18 to 16S ribosomal RNA. The chain is Small ribosomal subunit protein bS6 from Herminiimonas arsenicoxydans.